Consider the following 649-residue polypeptide: 1-deoxy-D-xylulose-5-phosphate synthase (649 aa).

Residues histidine 73 and 114–116 (SHA) each bind thiamine diphosphate. Aspartate 145 provides a ligand contact to Mg(2+). Residues 146–147 (GA), asparagine 175, tyrosine 286, and glutamate 367 each bind thiamine diphosphate. Asparagine 175 is a Mg(2+) binding site.

The protein belongs to the transketolase family. DXPS subfamily. In terms of assembly, homodimer. Requires Mg(2+) as cofactor. It depends on thiamine diphosphate as a cofactor.

It catalyses the reaction D-glyceraldehyde 3-phosphate + pyruvate + H(+) = 1-deoxy-D-xylulose 5-phosphate + CO2. The protein operates within metabolic intermediate biosynthesis; 1-deoxy-D-xylulose 5-phosphate biosynthesis; 1-deoxy-D-xylulose 5-phosphate from D-glyceraldehyde 3-phosphate and pyruvate: step 1/1. Functionally, catalyzes the acyloin condensation reaction between C atoms 2 and 3 of pyruvate and glyceraldehyde 3-phosphate to yield 1-deoxy-D-xylulose-5-phosphate (DXP). This Rhodococcus jostii (strain RHA1) protein is 1-deoxy-D-xylulose-5-phosphate synthase.